The sequence spans 343 residues: L-idonate 5-dehydrogenase (NAD(P)(+)) (343 aa).

The Zn(2+) site is built by cysteine 40, histidine 65, cysteine 93, cysteine 96, cysteine 99, cysteine 107, and glutamate 153.

Belongs to the zinc-containing alcohol dehydrogenase family. Zn(2+) serves as cofactor.

It catalyses the reaction L-idonate + NADP(+) = 5-dehydro-D-gluconate + NADPH + H(+). The catalysed reaction is L-idonate + NAD(+) = 5-dehydro-D-gluconate + NADH + H(+). Its pathway is carbohydrate acid metabolism; L-idonate degradation. Functionally, catalyzes the NADH/NADPH-dependent oxidation of L-idonate to 5-ketogluconate (5KG). The protein is L-idonate 5-dehydrogenase (NAD(P)(+)) (idnD) of Escherichia coli (strain K12).